The sequence spans 357 residues: Guanine nucleotide-binding protein G(o) subunit alpha (357 aa).

Gly-2 carries the N-myristoyl glycine lipid modification. Residue Cys-3 is the site of S-palmitoyl cysteine attachment. The G-alpha domain occupies 32-357; sequence KDIKLLLLGA…ANNLRGCGLY (326 aa). A G1 motif region spans residues 35 to 48; sequence KLLLLGAGESGKST. Residues 40-47, 179-185, 204-208, 273-276, and Ala-329 each bind GTP; these read GAGESGKS, LRTRVKT, DVGGQ, and NKKD. Residues Ser-47 and Thr-185 each contribute to the Mg(2+) site. The tract at residues 177-185 is G2 motif; it reads DILRTRVKT. Residues 200 to 209 are G3 motif; the sequence is FKLFDVGGQR. The interval 269-276 is G4 motif; it reads ILFLNKKD. A G5 motif region spans residues 327–332; that stretch reads TCATDT.

It belongs to the G-alpha family. G(i/o/t/z) subfamily. As to quaternary structure, g proteins are composed of 3 units; alpha, beta and gamma. The alpha chain contains the guanine nucleotide binding site.

Functionally, guanine nucleotide-binding proteins (G proteins) are involved as modulators or transducers in various transmembrane signaling systems. The G(o) protein function is not clear. This chain is Guanine nucleotide-binding protein G(o) subunit alpha (SCGOA), found in Mizuhopecten yessoensis (Japanese scallop).